The primary structure comprises 170 residues: Lipoprotein signal peptidase (170 aa).

Transmembrane regions (helical) follow at residues 11 to 31 (LGWL…KLHF), 41 to 61 (IVVI…AAFS), 69 to 89 (WQRW…VVWL), and 95 to 115 (NETW…GNLY). Residues aspartate 125 and aspartate 144 contribute to the active site. The chain crosses the membrane as a helical span at residues 136–156 (YFPAFNFADSAITVGAVMLAL).

This sequence belongs to the peptidase A8 family.

It localises to the cell inner membrane. It carries out the reaction Release of signal peptides from bacterial membrane prolipoproteins. Hydrolyzes -Xaa-Yaa-Zaa-|-(S,diacylglyceryl)Cys-, in which Xaa is hydrophobic (preferably Leu), and Yaa (Ala or Ser) and Zaa (Gly or Ala) have small, neutral side chains.. It participates in protein modification; lipoprotein biosynthesis (signal peptide cleavage). In terms of biological role, this protein specifically catalyzes the removal of signal peptides from prolipoproteins. This chain is Lipoprotein signal peptidase, found in Pseudomonas fluorescens (strain ATCC BAA-477 / NRRL B-23932 / Pf-5).